A 214-amino-acid chain; its full sequence is Pyridoxine/pyridoxamine 5'-phosphate oxidase (214 aa).

Residues 9-12 and Lys-67 contribute to the substrate site; that span reads RKSY. FMN is bound by residues 62-67, 77-78, Arg-83, Lys-84, and Gln-106; these read RIVLLK and YT. Substrate-binding residues include Tyr-124, Arg-128, and Ser-132. FMN contacts are provided by residues 141 to 142 and Trp-186; that span reads QS. 192 to 194 provides a ligand contact to substrate; that stretch reads RLH. Arg-196 contributes to the FMN binding site.

The protein belongs to the pyridoxamine 5'-phosphate oxidase family. In terms of assembly, homodimer. The cofactor is FMN.

The enzyme catalyses pyridoxamine 5'-phosphate + O2 + H2O = pyridoxal 5'-phosphate + H2O2 + NH4(+). It carries out the reaction pyridoxine 5'-phosphate + O2 = pyridoxal 5'-phosphate + H2O2. Its pathway is cofactor metabolism; pyridoxal 5'-phosphate salvage; pyridoxal 5'-phosphate from pyridoxamine 5'-phosphate: step 1/1. The protein operates within cofactor metabolism; pyridoxal 5'-phosphate salvage; pyridoxal 5'-phosphate from pyridoxine 5'-phosphate: step 1/1. Functionally, catalyzes the oxidation of either pyridoxine 5'-phosphate (PNP) or pyridoxamine 5'-phosphate (PMP) into pyridoxal 5'-phosphate (PLP). This Leptospira interrogans serogroup Icterohaemorrhagiae serovar copenhageni (strain Fiocruz L1-130) protein is Pyridoxine/pyridoxamine 5'-phosphate oxidase.